Consider the following 461-residue polypeptide: Kynurenine 3-monooxygenase (461 aa).

Helical transmembrane passes span 395 to 415 and 432 to 452; these read TIMN…VTFS and ILSR…AAGI.

Belongs to the aromatic-ring hydroxylase family. KMO subfamily. FAD is required as a cofactor.

It localises to the mitochondrion. The protein resides in the membrane. It carries out the reaction L-kynurenine + NADPH + O2 + H(+) = 3-hydroxy-L-kynurenine + NADP(+) + H2O. It functions in the pathway cofactor biosynthesis; NAD(+) biosynthesis; quinolinate from L-kynurenine: step 1/3. Functionally, catalyzes the hydroxylation of L-kynurenine (L-Kyn) to form 3-hydroxy-L-kynurenine (L-3OHKyn). Required for synthesis of quinolinic acid. This is Kynurenine 3-monooxygenase from Caenorhabditis elegans.